Consider the following 120-residue polypeptide: Large ribosomal subunit protein uL18 (120 aa).

This sequence belongs to the universal ribosomal protein uL18 family. In terms of assembly, part of the 50S ribosomal subunit; part of the 5S rRNA/L5/L18/L25 subcomplex. Contacts the 5S and 23S rRNAs.

Its function is as follows. This is one of the proteins that bind and probably mediate the attachment of the 5S RNA into the large ribosomal subunit, where it forms part of the central protuberance. The chain is Large ribosomal subunit protein uL18 from Bartonella quintana (strain Toulouse) (Rochalimaea quintana).